We begin with the raw amino-acid sequence, 127 residues long: Gonadotropin subunit beta-1 (127 aa).

Residues 1–22 (MHLAVTALCLTLAPVLARASTS) form the signal peptide. 6 disulfides stabilise this stretch: cysteine 23/cysteine 71, cysteine 37/cysteine 86, cysteine 40/cysteine 124, cysteine 48/cysteine 102, cysteine 52/cysteine 104, and cysteine 107/cysteine 114. Asparagine 27 and asparagine 44 each carry an N-linked (GlcNAc...) asparagine glycan.

This sequence belongs to the glycoprotein hormones subunit beta family. As to quaternary structure, heterodimer of an alpha and a beta chain.

It localises to the secreted. Its function is as follows. Involved in gametogenesis and steroidogenesis. The chain is Gonadotropin subunit beta-1 (cgba) from Anguilla japonica (Japanese eel).